We begin with the raw amino-acid sequence, 351 residues long: MKALAKLKKQPGIWMINDAPIPEYGYNDVLIKIKKTAICGTDLHIYNWDKWSQNTIPVPMITGHEFAGEVVAKGDGVTSVDIGDRVSGEGHLVCGQCRNCRAGKRHLCRKTIGIGVNVQGAFAEYLVMPAVNVFKIPDSISDDIASTFDPMGNAIHTALSFNLTGEDVLITGAGPIGLMAVKIARFCGARRIVITDINEYRLQMARDFGATVALNVAPFKNQDELVKQMRKVMSDIGMTEGFDVGLEMSGINSAISMMLDVMNHGGKLSLLGISAGDISVDWGAILFKGLTLKGIYGREMFETWYLMTSMLQAGMDMNPIITHRLHIDEFQKGFEIMKSGQCGKVILDWSS.

Cys39 contacts Zn(2+). Residues Thr41 and His44 each act as charge relay system in the active site. Residues His64, Glu65, Cys94, Cys97, Cys100, and Cys108 each contribute to the Zn(2+) site. NAD(+)-binding positions include Ile176, Asp196, Arg201, 271-273 (LGI), and 295-296 (IY).

The protein belongs to the zinc-containing alcohol dehydrogenase family. As to quaternary structure, homotetramer. Zn(2+) serves as cofactor.

It is found in the cytoplasm. The catalysed reaction is L-threonine + NAD(+) = (2S)-2-amino-3-oxobutanoate + NADH + H(+). It functions in the pathway amino-acid degradation; L-threonine degradation via oxydo-reductase pathway; glycine from L-threonine: step 1/2. Functionally, catalyzes the NAD(+)-dependent oxidation of L-threonine to 2-amino-3-ketobutyrate. This chain is L-threonine 3-dehydrogenase, found in Francisella tularensis subsp. holarctica (strain OSU18).